Consider the following 122-residue polypeptide: Large ribosomal subunit protein uL14 (122 aa).

This sequence belongs to the universal ribosomal protein uL14 family. In terms of assembly, part of the 50S ribosomal subunit. Forms a cluster with proteins L3 and L19. In the 70S ribosome, L14 and L19 interact and together make contacts with the 16S rRNA in bridges B5 and B8.

Binds to 23S rRNA. Forms part of two intersubunit bridges in the 70S ribosome. This chain is Large ribosomal subunit protein uL14, found in Campylobacter lari (strain RM2100 / D67 / ATCC BAA-1060).